Here is a 238-residue protein sequence, read N- to C-terminus: Probable transcriptional regulatory protein YeeN (238 aa).

Belongs to the TACO1 family. YeeN subfamily.

It is found in the cytoplasm. This is Probable transcriptional regulatory protein YeeN from Shigella sonnei (strain Ss046).